The sequence spans 692 residues: Potassium-transporting ATPase ATP-binding subunit (692 aa).

A run of 4 helical transmembrane segments spans residues 50–70 (PIMF…FLPS), 74–94 (SIPG…VLFA), 240–260 (LTLI…YLGF), and 266–286 (VLVA…LSAI). Catalysis depends on Asp-319, which acts as the 4-aspartylphosphate intermediate. ATP-binding positions include Asp-356, Glu-360, 388-395 (FKAETRMS), and Lys-407. Residues Asp-530 and Asp-534 each coordinate Mg(2+). 3 helical membrane passes run 600 to 620 (FAII…LNIM), 628 to 648 (AILS…PLAM), and 672 to 692 (GGVI…GLFI).

It belongs to the cation transport ATPase (P-type) (TC 3.A.3) family. Type IA subfamily. As to quaternary structure, the system is composed of three essential subunits: KdpA, KdpB and KdpC.

It localises to the cell membrane. It catalyses the reaction K(+)(out) + ATP + H2O = K(+)(in) + ADP + phosphate + H(+). Functionally, part of the high-affinity ATP-driven potassium transport (or Kdp) system, which catalyzes the hydrolysis of ATP coupled with the electrogenic transport of potassium into the cytoplasm. This subunit is responsible for energy coupling to the transport system and for the release of the potassium ions to the cytoplasm. The polypeptide is Potassium-transporting ATPase ATP-binding subunit (Bacillus thuringiensis (strain Al Hakam)).